Consider the following 247-residue polypeptide: Adenosylcobinamide-GDP ribazoletransferase (247 aa).

The next 5 helical transmembrane spans lie at 34–54 (IITF…VFMA), 59–79 (FGVP…TGGF), 113–133 (GGLA…ELAL), 138–158 (ILAS…LLMY), and 194–214 (VLLP…AIFI).

The protein belongs to the CobS family. It depends on Mg(2+) as a cofactor.

The protein localises to the cell inner membrane. The enzyme catalyses alpha-ribazole + adenosylcob(III)inamide-GDP = adenosylcob(III)alamin + GMP + H(+). It carries out the reaction alpha-ribazole 5'-phosphate + adenosylcob(III)inamide-GDP = adenosylcob(III)alamin 5'-phosphate + GMP + H(+). The protein operates within cofactor biosynthesis; adenosylcobalamin biosynthesis; adenosylcobalamin from cob(II)yrinate a,c-diamide: step 7/7. Joins adenosylcobinamide-GDP and alpha-ribazole to generate adenosylcobalamin (Ado-cobalamin). Also synthesizes adenosylcobalamin 5'-phosphate from adenosylcobinamide-GDP and alpha-ribazole 5'-phosphate. The sequence is that of Adenosylcobinamide-GDP ribazoletransferase from Escherichia coli O17:K52:H18 (strain UMN026 / ExPEC).